A 305-amino-acid polypeptide reads, in one-letter code: Mitochondrial brown fat uncoupling protein 1 (305 aa).

Residues 1-10 are Mitochondrial intermembrane-facing; the sequence is MVGHAATDVP. The helical transmembrane segment at 11-32 threads the bilayer; sequence PTMAVKIFSAGVAACVADIITF. 3 Solcar repeats span residues 11 to 102, 109 to 199, and 208 to 293; these read PTMA…VQEF, ASLG…MKEA, and DDVP…LKRE. Residues 33-73 are Mitochondrial matrix-facing; the sequence is PLDTAKVRLQIQGECLTSSAFRYKGVLGTIITLAKTEGPVK. Lys-56 lines the fatty acid 16:0 pocket. Residues 74–96 form a helical membrane-spanning segment; it reads LYSGLPAGLQRQISFASLRIGLY. Over 97 to 114 the chain is Mitochondrial intermembrane; that stretch reads DTVQEFFTTGKEASLGSK. Residues 115 to 131 form a helical membrane-spanning segment; that stretch reads ISAGLTTGGVAVFIGQP. Residues 132 to 176 lie on the Mitochondrial matrix side of the membrane; sequence TEVVKVRLQAQSHLHGPKPRYTGTYNAYRIIATTEGLTGLWKGTT. A helical transmembrane segment spans residues 177 to 193; the sequence is PNLTRNVIINCTELVTY. The Mitochondrial intermembrane segment spans residues 194–210; sequence DLMKEALVKNKLLADDV. A helical membrane pass occupies residues 211 to 230; that stretch reads PCHFVSAVVAGFCTTVLSSP. Residues 231–264 are Mitochondrial matrix-facing; sequence VDVVKTRFVNSSPGQYTSVPNCAMMMLTREGPSA. Cysteine sulfenic acid (-SOH) is present on Cys-252. A helical transmembrane segment spans residues 265–287; sequence FFKGFVPSFLRLGSWNIIMFVCF. Residue Lys-267 participates in fatty acid 16:0 binding. Over 288-305 the chain is Mitochondrial intermembrane; that stretch reads EQLKRELMKSRQAMDCAT.

It belongs to the mitochondrial carrier (TC 2.A.29) family. As to quaternary structure, most probably functions as a monomer. Binds one purine nucleotide per monomer. However, has also been suggested to function as a homodimer or a homotetramer. Tightly associates with cardiolipin in the mitochondrion inner membrane; may stabilize and regulate its activity. In terms of processing, may undergo sulfenylation upon cold exposure. May increase the sensitivity of UCP1 thermogenic function to the activation by noradrenaline probably through structural effects. May undergo ubiquitin-mediated proteasomal degradation.

The protein localises to the mitochondrion inner membrane. The catalysed reaction is H(+)(in) = H(+)(out). With respect to regulation, has no constitutive proton transporter activity and has to be activated by long-chain fatty acids/LCFAs. Inhibited by purine nucleotides. Both purine nucleotides and LCFAs bind the cytosolic side of the transporter and directly compete to activate or inhibit it. Activated by noradrenaline and reactive oxygen species. Despite lacking canonical translational encoding for selenocysteine, a small pool of the protein has been observed to selectively incorporate selenocysteine at 'Cys-252'. Selenocysteine-modified protein is highly sensitive to redox modification and may constitute a pool of protein highly sensitive to activation by elevated levels of reactive oxygen species (ROS). In terms of biological role, mitochondrial protein responsible for thermogenic respiration, a specialized capacity of brown adipose tissue and beige fat that participates in non-shivering adaptive thermogenesis to temperature and diet variations and more generally to the regulation of energy balance. Functions as a long-chain fatty acid/LCFA and proton symporter, simultaneously transporting one LCFA and one proton through the inner mitochondrial membrane. However, LCFAs remaining associated with the transporter via their hydrophobic tails, it results in an apparent transport of protons activated by LCFAs. Thereby, dissipates the mitochondrial proton gradient and converts the energy of substrate oxydation into heat instead of ATP. Regulates the production of reactive oxygen species/ROS by mitochondria. In Ovis aries (Sheep), this protein is Mitochondrial brown fat uncoupling protein 1.